The following is a 534-amino-acid chain: CTP synthase (534 aa).

The segment at M1–L267 is amidoligase domain. S13 serves as a coordination point for CTP. S13 serves as a coordination point for UTP. Position 14–19 (S14–I19) interacts with ATP. Y54 is a binding site for L-glutamine. ATP is bound at residue D71. 2 residues coordinate Mg(2+): D71 and E141. Residues D148–E150, K188–Q193, and K224 contribute to the CTP site. UTP-binding positions include K188 to Q193 and K224. A Glutamine amidotransferase type-1 domain is found at K292–K534. An L-glutamine-binding site is contributed by G354. The active-site Nucleophile; for glutamine hydrolysis is C381. L-glutamine-binding positions include L382–Q385, E405, and R463. Catalysis depends on residues H508 and E510.

It belongs to the CTP synthase family. As to quaternary structure, homotetramer.

It catalyses the reaction UTP + L-glutamine + ATP + H2O = CTP + L-glutamate + ADP + phosphate + 2 H(+). The enzyme catalyses L-glutamine + H2O = L-glutamate + NH4(+). The catalysed reaction is UTP + NH4(+) + ATP = CTP + ADP + phosphate + 2 H(+). It participates in pyrimidine metabolism; CTP biosynthesis via de novo pathway; CTP from UDP: step 2/2. Its activity is regulated as follows. Allosterically activated by GTP, when glutamine is the substrate; GTP has no effect on the reaction when ammonia is the substrate. The allosteric effector GTP functions by stabilizing the protein conformation that binds the tetrahedral intermediate(s) formed during glutamine hydrolysis. Inhibited by the product CTP, via allosteric rather than competitive inhibition. Catalyzes the ATP-dependent amination of UTP to CTP with either L-glutamine or ammonia as the source of nitrogen. Regulates intracellular CTP levels through interactions with the four ribonucleotide triphosphates. This Streptococcus thermophilus (strain ATCC BAA-250 / LMG 18311) protein is CTP synthase.